We begin with the raw amino-acid sequence, 491 residues long: uncharacterized protein (491 aa).

266–273 (GIQGTGKS) is a binding site for ATP.

It belongs to the AAA ATPase family. Highly divergent.

The protein resides in the plastid. It is found in the chloroplast. This is an uncharacterized protein from Porphyra purpurea (Red seaweed).